A 272-amino-acid polypeptide reads, in one-letter code: AA9 family lytic polysaccharide monooxygenase G (272 aa).

The signal sequence occupies residues 1 to 22 (MKGAGSASFLLTLLSTITRTSA). H23 lines the Cu(2+) pocket. The N-linked (GlcNAc...) asparagine glycan is linked to N60. Intrachain disulfides connect C78–C202 and C121–C125. Cu(2+) is bound at residue H110. Residues H188 and Q197 each coordinate O2. Y199 provides a ligand contact to Cu(2+).

The protein belongs to the polysaccharide monooxygenase AA9 family. The cofactor is Cu(2+).

The protein localises to the secreted. It carries out the reaction [(1-&gt;4)-beta-D-glucosyl]n+m + reduced acceptor + O2 = 4-dehydro-beta-D-glucosyl-[(1-&gt;4)-beta-D-glucosyl]n-1 + [(1-&gt;4)-beta-D-glucosyl]m + acceptor + H2O.. Functionally, lytic polysaccharide monooxygenase (LPMO) that depolymerizes crystalline and amorphous polysaccharides via the oxidation of scissile alpha- or beta-(1-4)-glycosidic bonds, yielding C1 or C4 oxidation products. Catalysis by LPMOs requires the reduction of the active-site copper from Cu(II) to Cu(I) by a reducing agent and H(2)O(2) or O(2) as a cosubstrate. Acts preferentially on crystalline regions of cellulose such as highly crystalline algae cellulose. This chain is AA9 family lytic polysaccharide monooxygenase G, found in Emericella nidulans (strain FGSC A4 / ATCC 38163 / CBS 112.46 / NRRL 194 / M139) (Aspergillus nidulans).